A 161-amino-acid polypeptide reads, in one-letter code: Cyclic pyranopterin monophosphate synthase (161 aa).

Substrate is bound by residues 75–77 (MCH) and 114–115 (ME). The active site involves Asp129.

This sequence belongs to the MoaC family. In terms of assembly, homohexamer; trimer of dimers.

It carries out the reaction (8S)-3',8-cyclo-7,8-dihydroguanosine 5'-triphosphate = cyclic pyranopterin phosphate + diphosphate. Its pathway is cofactor biosynthesis; molybdopterin biosynthesis. Its function is as follows. Catalyzes the conversion of (8S)-3',8-cyclo-7,8-dihydroguanosine 5'-triphosphate to cyclic pyranopterin monophosphate (cPMP). This Staphylococcus carnosus (strain TM300) protein is Cyclic pyranopterin monophosphate synthase.